We begin with the raw amino-acid sequence, 379 residues long: Very late expression factor 1 (379 aa).

Residues 169–348 enclose the Tyr recombinase domain; it reads VIDTILNFIN…YNIGLDETSS (180 aa). Residues Arg210, Lys239, Arg303, and His326 contribute to the active site. The active-site O-(3'-phospho-DNA)-tyrosine intermediate is Tyr335. Positions 346–358 are enriched in acidic residues; the sequence is TSSEEENNNDDDD. Positions 346–379 are disordered; that stretch reads TSSEEENNNDDDDAQHNRNSSGSSGESLLYYRNE. Residues 362–379 show a composition bias toward low complexity; that stretch reads NRNSSGSSGESLLYYRNE.

It belongs to the 'phage' integrase family.

In terms of biological role, plays a role in nucleocapsid assembly and serves an essential function during the final stages of the DNA packaging process. Participates in the processing of branched DNA molecules at the late stages of viral genome replication. The protein is Very late expression factor 1 (VLF-1) of Lepidoptera (butterflies and moths).